The sequence spans 396 residues: Putative ribosomal RNA large subunit methyltransferase YwbD (396 aa).

The region spanning 1–79 is the PUA domain; it reads MKLLTLKKAH…KHEQIDQAFF (79 aa).

Belongs to the methyltransferase superfamily. RlmI family.

The protein localises to the cytoplasm. In Bacillus subtilis (strain 168), this protein is Putative ribosomal RNA large subunit methyltransferase YwbD (ywbD).